The primary structure comprises 56 residues: Cytochrome b-c1 complex subunit 10 (56 aa).

Residues 1 to 16 lie on the Mitochondrial matrix side of the membrane; sequence MLSRFLGPRYRELARN. Residues 17–38 form a helical membrane-spanning segment; the sequence is WIPTAGMWGTVGAVGLVWATDW. Topologically, residues 39-56 are mitochondrial intermembrane; sequence RLILDWVPYINGKFKKDD.

The protein belongs to the UQCR11/QCR10 family. In terms of assembly, component of the ubiquinol-cytochrome c oxidoreductase (cytochrome b-c1 complex, complex III, CIII), a multisubunit enzyme composed of 11 subunits. The complex is composed of 3 respiratory subunits cytochrome b, cytochrome c1 and Rieske protein UQCRFS1, 2 core protein subunits UQCRC1/QCR1 and UQCRC2/QCR2, and 6 low-molecular weight protein subunits UQCRH/QCR6, UQCRB/QCR7, UQCRQ/QCR8, UQCR10/QCR9, UQCR11/QCR10 and subunit 9, the cleavage product of Rieske protein UQCRFS1. The complex exists as an obligatory dimer and forms supercomplexes (SCs) in the inner mitochondrial membrane with NADH-ubiquinone oxidoreductase (complex I, CI) and cytochrome c oxidase (complex IV, CIV), resulting in different assemblies (supercomplex SCI(1)III(2)IV(1) and megacomplex MCI(2)III(2)IV(2)).

Its subcellular location is the mitochondrion inner membrane. Functionally, component of the ubiquinol-cytochrome c oxidoreductase, a multisubunit transmembrane complex that is part of the mitochondrial electron transport chain which drives oxidative phosphorylation. The respiratory chain contains 3 multisubunit complexes succinate dehydrogenase (complex II, CII), ubiquinol-cytochrome c oxidoreductase (cytochrome b-c1 complex, complex III, CIII) and cytochrome c oxidase (complex IV, CIV), that cooperate to transfer electrons derived from NADH and succinate to molecular oxygen, creating an electrochemical gradient over the inner membrane that drives transmembrane transport and the ATP synthase. The cytochrome b-c1 complex catalyzes electron transfer from ubiquinol to cytochrome c, linking this redox reaction to translocation of protons across the mitochondrial inner membrane, with protons being carried across the membrane as hydrogens on the quinol. In the process called Q cycle, 2 protons are consumed from the matrix, 4 protons are released into the intermembrane space and 2 electrons are passed to cytochrome c. QCR10 has a role in CIII assembly and RIP1 stability. The polypeptide is Cytochrome b-c1 complex subunit 10 (Uqcr11) (Mus musculus (Mouse)).